The following is a 520-amino-acid chain: Transactivator/viroplasmin protein (520 aa).

The interval 487-520 is disordered; the sequence is KDASADSGPKDGPPPTRSIVEKEDVPTTSSKQVD.

The protein belongs to the caulimoviridae viroplasmin family.

It localises to the host cytoplasm. Functionally, enhances the ribosomal termination-reinitiation event leading to the translation of major open reading frames on the polycistronic viral RNAs. The protein is Transactivator/viroplasmin protein of Arabidopsis thaliana (Mouse-ear cress).